Consider the following 332-residue polypeptide: Isopentenyl phosphate kinase (332 aa).

Residue M1 is modified to N-acetylmethionine. 18 to 22 (KLGGA) contacts ATP. A96 contributes to the substrate binding site. G97 is an ATP binding site. Positions 101 and 202 each coordinate substrate. ATP is bound by residues D223, 228–233 (YDRPPS), G279, and K283.

Belongs to the isopentenyl phosphate kinase family.

The protein localises to the cytoplasm. Its subcellular location is the cytosol. The catalysed reaction is isopentenyl phosphate + ATP = isopentenyl diphosphate + ADP. Its function is as follows. Catalyzes the formation of isopentenyl diphosphate (IPP), the universal five-carbon isoprenoid building block of all natural isoprenoids. Acts in parallel with the mevalonate (MVA) pathway and plays an important role in regulating the formation of both MVA and methylerythritol phosphate (MEP) pathway-derived terpenoid compounds by controlling the ratio of isopentenyl phosphate (IP) and dimethylallyl phosphate (DMAP) to isopentenyl diphosphate (IPP) and dimethylallyl diphosphate (DMAPP). Controls the levels of IP and DMAP that are competitive inhibitors of the farnesyl diphosphate synthase. Regulates the production of farnesyl diphosphate-derived terpenoids in the cytosol, and geranyl diphosphate-derived compounds in plastids. This chain is Isopentenyl phosphate kinase, found in Arabidopsis thaliana (Mouse-ear cress).